Here is a 730-residue protein sequence, read N- to C-terminus: S-adenosyl-L-methionine-dependent tRNA 4-demethylwyosine synthase TYW1 (730 aa).

Residues 79–237 form the Flavodoxin-like domain; that stretch reads VKVFYGSQTG…DFQVWKGKFL (159 aa). FMN-binding positions include 85 to 89 and 176 to 208; these read SQTGT and VFGL…ARIM. The disordered stretch occupies residues 253-351; the sequence is GNCKKASCKN…RKSECEEERR (99 aa). Positions 267–282 are enriched in basic and acidic residues; sequence KEEAEDNHSLAEKNNS. Residues 283-297 are compositionally biased toward acidic residues; sequence EEELMESSSDEESSS. The span at 333–351 shows a compositional bias: basic and acidic residues; that stretch reads SQRVKQNGERKSECEEERR. In terms of domain architecture, Radical SAM core spans 398–642; sequence YGIESHRCME…ANLLPDYEIA (245 aa). Positions 414, 418, and 421 each coordinate [4Fe-4S] cluster.

The protein belongs to the TYW1 family. It depends on [4Fe-4S] cluster as a cofactor.

It catalyses the reaction N(1)-methylguanosine(37) in tRNA(Phe) + pyruvate + S-adenosyl-L-methionine = 4-demethylwyosine(37) in tRNA(Phe) + 5'-deoxyadenosine + L-methionine + CO2 + H2O. It functions in the pathway tRNA modification; wybutosine-tRNA(Phe) biosynthesis. Probable component of the wybutosine biosynthesis pathway. Wybutosine is a hyper modified guanosine with a tricyclic base found at the 3'-position adjacent to the anticodon of eukaryotic phenylalanine tRNA. Catalyzes the condensation of N-methylguanine with 2 carbon atoms from pyruvate to form the tricyclic 4-demethylwyosine, an intermediate in wybutosine biosynthesis. This is S-adenosyl-L-methionine-dependent tRNA 4-demethylwyosine synthase TYW1 (tyw1) from Danio rerio (Zebrafish).